The primary structure comprises 218 residues: Mitochondrial import inner membrane translocase subunit TIM17-1 (218 aa).

Helical transmembrane passes span 19-36 (VGGA…YHLI), 66-82 (FSVW…ALVY), 89-105 (PWNS…FLSL), and 116-133 (ALVG…GIML).

This sequence belongs to the Tim17/Tim22/Tim23 family. Component of the TIM17:23 complex at least composed of TIM23, TIM17 and TIM50. The complex interacts with the TIM44 component of the PAM complex. Expressed in flowers, leaves and cotyledons, and at very low levels in roots.

Its subcellular location is the mitochondrion inner membrane. Essential component of the TIM17:23 complex, a complex that mediates the translocation of transit peptide-containing proteins across the mitochondrial inner membrane. Links the inner and outer membranes. This Arabidopsis thaliana (Mouse-ear cress) protein is Mitochondrial import inner membrane translocase subunit TIM17-1 (TIM17-1).